A 320-amino-acid chain; its full sequence is 1-aminocyclopropane-1-carboxylate oxidase (320 aa).

Positions 154 to 254 (PTFGTKVSNY…RMSLASFYNP (101 aa)) constitute a Fe2OG dioxygenase domain. Residues His-178, Asp-180, and His-235 each coordinate Fe cation.

This sequence belongs to the iron/ascorbate-dependent oxidoreductase family. It depends on Fe cation as a cofactor.

The enzyme catalyses 1-aminocyclopropane-1-carboxylate + L-ascorbate + O2 = ethene + L-dehydroascorbate + hydrogen cyanide + CO2 + 2 H2O. It functions in the pathway alkene biosynthesis; ethylene biosynthesis via S-adenosyl-L-methionine; ethylene from S-adenosyl-L-methionine: step 2/2. The polypeptide is 1-aminocyclopropane-1-carboxylate oxidase (ACO) (Persea americana (Avocado)).